Consider the following 1102-residue polypeptide: Coiled-coil domain-containing protein AGAP005037 (1102 aa).

Residues 1 to 11 (MLIRWKSKDKS) are compositionally biased toward basic and acidic residues. Disordered regions lie at residues 1–69 (MLIR…HTLG) and 295–318 (HKSK…RGMY). Positions 12–21 (SSSTSSSSST) are enriched in low complexity. A compositionally biased stretch (basic and acidic residues) spans 50 to 65 (IDDRRRSARSREDPRR). Residues 405 to 430 (HRIRVEHMERQLANLTGLVQKALTQN) adopt a coiled-coil conformation. Disordered stretches follow at residues 450-475 (RNAE…STCH) and 489-539 (DIQG…PLVM). Coiled coils occupy residues 554–579 (EVYN…LRRL) and 614–654 (DKER…EVIN). Disordered stretches follow at residues 745–774 (LPIP…PSPR), 832–958 (TKIS…CSDN), and 1031–1087 (LCGG…TLPP). The span at 832 to 849 (TKISQSQLYPSEPVSSNV) shows a compositional bias: polar residues. Over residues 867 to 881 (PPQPTRPTTGKPPVP) the composition is skewed to pro residues. The segment covering 904–918 (TSSRSPLASPTSPHV) has biased composition (low complexity). The segment covering 936–958 (DCEQQQRTSEGTDSGSESVCSDN) has biased composition (polar residues).

This is Coiled-coil domain-containing protein AGAP005037 from Anopheles gambiae (African malaria mosquito).